A 551-amino-acid chain; its full sequence is Glutamate--tRNA ligase (551 aa).

Residues Pro-100–Ser-110 carry the 'HIGH' region motif.

The protein belongs to the class-I aminoacyl-tRNA synthetase family. Glutamate--tRNA ligase type 2 subfamily.

Its subcellular location is the cytoplasm. It catalyses the reaction tRNA(Glu) + L-glutamate + ATP = L-glutamyl-tRNA(Glu) + AMP + diphosphate. Its function is as follows. Catalyzes the attachment of glutamate to tRNA(Glu) in a two-step reaction: glutamate is first activated by ATP to form Glu-AMP and then transferred to the acceptor end of tRNA(Glu). The polypeptide is Glutamate--tRNA ligase (Archaeoglobus fulgidus (strain ATCC 49558 / DSM 4304 / JCM 9628 / NBRC 100126 / VC-16)).